Reading from the N-terminus, the 481-residue chain is tRNA-guanine(15) transglycosylase (481 aa).

The Nucleophile role is filled by D87. Substrate contacts are provided by D122 and A191. Zn(2+) contacts are provided by C273, C275, and C278.

It belongs to the archaeosine tRNA-ribosyltransferase family. Zn(2+) serves as cofactor.

The enzyme catalyses guanosine(15) in tRNA + 7-cyano-7-deazaguanine = 7-cyano-7-carbaguanosine(15) in tRNA + guanine. It participates in tRNA modification; archaeosine-tRNA biosynthesis. Exchanges the guanine residue with 7-cyano-7-deazaguanine (preQ0) at position 15 in the dihydrouridine loop (D-loop) of archaeal tRNAs. This is tRNA-guanine(15) transglycosylase from Archaeoglobus fulgidus (strain ATCC 49558 / DSM 4304 / JCM 9628 / NBRC 100126 / VC-16).